The chain runs to 145 residues: Basic phospholipase A2 cPm08 (145 aa).

Residues 1–21 (MYPAHLLVLLAVCVSLLGASA) form the signal peptide. The propeptide occupies 22 to 27 (IPPLPL). Cystine bridges form between Cys38–Cys98, Cys54–Cys144, Cys56–Cys72, Cys71–Cys125, Cys78–Cys118, Cys87–Cys111, and Cys105–Cys116. The Ca(2+) site is built by Tyr55, Gly57, and Gly59. His75 is an active-site residue. Ca(2+) is bound at residue Asp76. Residue Asp119 is part of the active site.

This sequence belongs to the phospholipase A2 family. Group I subfamily. D49 sub-subfamily. Ca(2+) is required as a cofactor. In terms of tissue distribution, expressed by the venom gland.

It localises to the secreted. It carries out the reaction a 1,2-diacyl-sn-glycero-3-phosphocholine + H2O = a 1-acyl-sn-glycero-3-phosphocholine + a fatty acid + H(+). In terms of biological role, PLA2 catalyzes the calcium-dependent hydrolysis of the 2-acyl groups in 3-sn-phosphoglycerides. The chain is Basic phospholipase A2 cPm08 from Laticauda semifasciata (Black-banded sea krait).